A 264-amino-acid chain; its full sequence is Thymidylate synthase (264 aa).

Residues R21 and 126-127 (RR) contribute to the dUMP site. C146 serves as the catalytic Nucleophile. DUMP contacts are provided by residues 166–169 (RSAD), N177, and 207–209 (HLY). D169 provides a ligand contact to (6R)-5,10-methylene-5,6,7,8-tetrahydrofolate. A263 provides a ligand contact to (6R)-5,10-methylene-5,6,7,8-tetrahydrofolate.

The protein belongs to the thymidylate synthase family. Bacterial-type ThyA subfamily. As to quaternary structure, homodimer.

It localises to the cytoplasm. It carries out the reaction dUMP + (6R)-5,10-methylene-5,6,7,8-tetrahydrofolate = 7,8-dihydrofolate + dTMP. It functions in the pathway pyrimidine metabolism; dTTP biosynthesis. Catalyzes the reductive methylation of 2'-deoxyuridine-5'-monophosphate (dUMP) to 2'-deoxythymidine-5'-monophosphate (dTMP) while utilizing 5,10-methylenetetrahydrofolate (mTHF) as the methyl donor and reductant in the reaction, yielding dihydrofolate (DHF) as a by-product. This enzymatic reaction provides an intracellular de novo source of dTMP, an essential precursor for DNA biosynthesis. The polypeptide is Thymidylate synthase (Afipia carboxidovorans (strain ATCC 49405 / DSM 1227 / KCTC 32145 / OM5) (Oligotropha carboxidovorans)).